We begin with the raw amino-acid sequence, 184 residues long: Translation initiation factor IF-3 (184 aa).

This sequence belongs to the IF-3 family. In terms of assembly, monomer.

Its subcellular location is the cytoplasm. In terms of biological role, IF-3 binds to the 30S ribosomal subunit and shifts the equilibrium between 70S ribosomes and their 50S and 30S subunits in favor of the free subunits, thus enhancing the availability of 30S subunits on which protein synthesis initiation begins. This chain is Translation initiation factor IF-3, found in Hamiltonella defensa subsp. Acyrthosiphon pisum (strain 5AT).